Here is a 288-residue protein sequence, read N- to C-terminus: Small ribosomal subunit protein uS9m (288 aa).

Residues 269–288 are disordered; the sequence is VERKKPGKKKARKMPTWVKR.

Belongs to the universal ribosomal protein uS9 family.

Its subcellular location is the mitochondrion. In Candida glabrata (strain ATCC 2001 / BCRC 20586 / JCM 3761 / NBRC 0622 / NRRL Y-65 / CBS 138) (Yeast), this protein is Small ribosomal subunit protein uS9m (MRPS9).